The primary structure comprises 298 residues: MSRTLSMRRRQRLEMYYKKVPSVFTVTSNQEESTLQLVNNKPVVIEPFRSSVVPLGVYLRCLPGYACMLLANTYRNVTFHPGLIDPTYMGELKLICNNRTDAYVVVPAGRLKVTVLAFTFLSPILTGPSVLSPPQYTDDAGYDLCLDQLVMVLPLKAFTFQLALTCPIQSKNFTPVVLGRSGLAAKGLSITPCKWKGDVLRLSMFNHTSETIILPEGSRLCQVVFMHNDHLPTIKPRILAAFLFQHRLMDMPFCQSRVSFIDIQKDPCTSTSTLFQDSTGNSISDATRGSKGLGSSGI.

Residue 180–182 participates in substrate binding; it reads RSG.

It belongs to the dUTPase family. Mg(2+) serves as cofactor.

It catalyses the reaction dUTP + H2O = dUMP + diphosphate + H(+). Involved in nucleotide metabolism: produces dUMP, the immediate precursor of thymidine nucleotides and decreases the intracellular concentration of dUTP to avoid uracil incorporation into viral DNA. In Alcelaphine herpesvirus 1 (strain C500) (AlHV-1), this protein is Deoxyuridine 5'-triphosphate nucleotidohydrolase.